We begin with the raw amino-acid sequence, 600 residues long: 1,8-cineole synthase 1, chloroplastic (600 aa).

A chloroplast-targeting transit peptide spans 1 to 31 (MATLRISSALIYQNTLTHHFRLRRPHRFVCK). D342 provides a ligand contact to dimethylallyl diphosphate. D342 and D346 together coordinate Mg(2+). Residues 342 to 346 (DDIYD) carry the DDXXD motif motif. Positions 420, 484, and 487 each coordinate dimethylallyl diphosphate. Mg(2+) contacts are provided by N487, T491, and E495.

The protein belongs to the terpene synthase family. Tpsb subfamily. The cofactor is Mg(2+). It depends on Mn(2+) as a cofactor. In terms of tissue distribution, predominantly expressed in roots and at much lower levels in siliques. Not found in leaves, flowers or stems. Also detected in flowers in cv. Landsberg erecta. Not expressed in root apical meristem and elongation zone. Found in the vascular system of young roots and additionally in the cortex and epidermal cell layer of older roots.

It localises to the plastid. It is found in the chloroplast. It catalyses the reaction (2E)-geranyl diphosphate + H2O = 1,8-cineole + diphosphate. Its pathway is secondary metabolite biosynthesis; terpenoid biosynthesis. Involved in monoterpene (C10) biosynthesis. The major product is 1,8-cineole (52%) followed by minor amounts of sabinene (14.5%), myrcene (13.3%), (-)-(1S)-beta-pinene (7.8%), (-)-(4S)-limonene (4.0%), (E)-beta-ocimene (2.7%), alpha-terpineol (2.4%), (-)-(1S)-alpha-pinene (1.9%), terpinolene (0.8%), and (+)-alpha-thujene (0.6%). The chain is 1,8-cineole synthase 1, chloroplastic (TPS27) from Arabidopsis thaliana (Mouse-ear cress).